The sequence spans 517 residues: Cytochrome P450 monooxygenase stcB (517 aa).

Position 461 (cysteine 461) interacts with heme.

This sequence belongs to the cytochrome P450 family. Heme serves as cofactor.

It participates in mycotoxin biosynthesis; sterigmatocystin biosynthesis. Cytochrome P450 monooxygenase; part of the gene cluster that mediates the biosynthesis of sterigmatocystin (ST), a polyketide-derived furanocoumarin which is part of the most toxic and carcinogenic compounds among the known mycotoxins. The first step in the biosynthesis of sterigmatocystin is the production of hexanoate by the fatty acid synthase (FAS) units stcJ and stcK. The polyketide backbone is assembled by the non-reducing polyketide synthase stcA by condensation of the starter hexanoyl-CoA and 7 malonyl-CoA extender units followed by cyclization and release of norsolorinic acid. Norsolorinic acid is the first stable intermediate in the biosynthesis of sterigmatocystin and is converted into averantin (AVN) by the ketoreductase stcE which reduces the hexanoate ketone to an alcohol. Averantin is then oxidized into 5'-hydroxyaverantin (HAVN) by the cytochrome P450 monooxygenase stcF. 5'-hydroxyaverantin is further converted to 5'-oxyaverantin (OAVN) by the 5'-hydroxyaverantin dehydrogenase stcG. The next step is the conversion of OAVN into averufin (AVF) which is catalyzed by a yet to be identified enzyme. The cytochrome P450 monooxygenase stcB and the flavin-binding monooxygenase stcW are both required for the conversion of averufin to 1-hydroxyversicolorone. The esterase stcI probably catalyzes the formation of versiconal hemiacetal acetate from 1-hydroxyversicolorone. The oxydoreductase stcN then probably catalyzes the biosynthetic step from versiconal to versicolorin B (VERB). The next step is performed by the versicolorin B desaturase stcL to produce versicolorin A (VERA). The ketoreductase stcU and the cytochrome P450 monooxygenase stcS are involved in the conversion of versicolorin A to demethylsterigmatocystin. The Baeyer-Villiger oxidas stcQ and the reductase stcR might be involved in the biosynthetic step from versicolorin A to demethylsterigmatocystin. The final step in the biosynthesis of sterigmatocystin is the methylation of demethylsterigmatocystin catalyzed by the methyltransferase stcP. This is Cytochrome P450 monooxygenase stcB from Emericella nidulans (strain FGSC A4 / ATCC 38163 / CBS 112.46 / NRRL 194 / M139) (Aspergillus nidulans).